The primary structure comprises 424 residues: Poly-cysteine and histidine-tailed protein (424 aa).

The signal sequence occupies residues 1–17 (MAFSTIVVLFVAAVGFG). Asn-291 carries N-linked (GlcNAc...) asparagine glycosylation. Residues 372 to 390 (VGGKKQQKDQPESEKKAEN) show a composition bias toward basic and acidic residues. The tract at residues 372–424 (VGGKKQQKDQPESEKKAENMPETTGNASHHQHRHHHGDSSSESHEQHHHHHHH) is disordered. The N-linked (GlcNAc...) asparagine glycan is linked to Asn-397.

Glycosylated. In terms of tissue distribution, expressed in larval tissues like cuticle, hypodermis and muscle (at protein level). Note=Not excreted into striated muscle fibers or nurse cell.

The protein resides in the secreted. Functionally, binds iron and zinc. May bind nickel. The chain is Poly-cysteine and histidine-tailed protein from Trichinella spiralis (Trichina worm).